Consider the following 184-residue polypeptide: Photosystem I assembly protein Ycf4 (184 aa).

Transmembrane regions (helical) follow at residues F22 to S42 and I57 to S77.

Belongs to the Ycf4 family.

Its subcellular location is the plastid. It is found in the chloroplast thylakoid membrane. Its function is as follows. Seems to be required for the assembly of the photosystem I complex. This Olimarabidopsis pumila (Dwarf rocket) protein is Photosystem I assembly protein Ycf4.